The chain runs to 179 residues: Orotate phosphoribosyltransferase (179 aa).

Residues Arg-94, Lys-95, Lys-98, His-100, and 120–128 (EDTSTTGNS) each bind 5-phospho-alpha-D-ribose 1-diphosphate. Positions 124 and 152 each coordinate orotate.

Belongs to the purine/pyrimidine phosphoribosyltransferase family. PyrE subfamily. As to quaternary structure, homodimer. The cofactor is Mg(2+).

The catalysed reaction is orotidine 5'-phosphate + diphosphate = orotate + 5-phospho-alpha-D-ribose 1-diphosphate. It participates in pyrimidine metabolism; UMP biosynthesis via de novo pathway; UMP from orotate: step 1/2. Catalyzes the transfer of a ribosyl phosphate group from 5-phosphoribose 1-diphosphate to orotate, leading to the formation of orotidine monophosphate (OMP). The protein is Orotate phosphoribosyltransferase of Mycobacterium avium (strain 104).